We begin with the raw amino-acid sequence, 955 residues long: Protein translocase subunit SecA (955 aa).

ATP-binding positions include Q87, G105–T109, and D494. The tract at residues A861–R955 is disordered. The span at Q874 to A888 shows a compositional bias: low complexity. Residues S943–R955 show a composition bias toward basic residues.

Belongs to the SecA family. Monomer and homodimer. Part of the essential Sec protein translocation apparatus which comprises SecA, SecYEG and auxiliary proteins SecDF. Other proteins may also be involved.

It localises to the cell membrane. The protein localises to the cytoplasm. It catalyses the reaction ATP + H2O + cellular proteinSide 1 = ADP + phosphate + cellular proteinSide 2.. In terms of biological role, part of the Sec protein translocase complex. Interacts with the SecYEG preprotein conducting channel. Has a central role in coupling the hydrolysis of ATP to the transfer of proteins into and across the cell membrane, serving as an ATP-driven molecular motor driving the stepwise translocation of polypeptide chains across the membrane. In Rhodococcus jostii (strain RHA1), this protein is Protein translocase subunit SecA.